The following is a 239-amino-acid chain: Large ribosomal subunit protein uL2 (239 aa).

2 disordered regions span residues 1–28 and 199–239; these read MGKR…VGPA and SHPH…RRKG. The span at 225 to 239 shows a compositional bias: basic residues; that stretch reads KVGHIAARRTGRRKG.

The protein belongs to the universal ribosomal protein uL2 family. Part of the 50S ribosomal subunit. Forms a bridge to the 30S subunit in the 70S ribosome.

One of the primary rRNA binding proteins. Required for association of the 30S and 50S subunits to form the 70S ribosome, for tRNA binding and peptide bond formation. It has been suggested to have peptidyltransferase activity; this is somewhat controversial. Makes several contacts with the 16S rRNA in the 70S ribosome. The chain is Large ribosomal subunit protein uL2 from Staphylothermus marinus (strain ATCC 43588 / DSM 3639 / JCM 9404 / F1).